Here is a 284-residue protein sequence, read N- to C-terminus: Nucleoid occlusion protein (284 aa).

The H-T-H motif DNA-binding region spans 143 to 162; the sequence is EALAQRVGKSQSAIANKMRL.

This sequence belongs to the ParB family.

It localises to the cytoplasm. It is found in the nucleoid. Functionally, effects nucleoid occlusion by binding relatively nonspecifically to DNA and preventing the assembly of the division machinery in the vicinity of the nucleoid, especially under conditions that disturb the cell cycle. It helps to coordinate cell division and chromosome segregation by preventing the formation of the Z ring through the nucleoid, which would cause chromosome breakage. This chain is Nucleoid occlusion protein, found in Listeria monocytogenes serotype 4b (strain CLIP80459).